The primary structure comprises 1400 residues: DNA-directed RNA polymerase subunit beta (1400 aa).

Belongs to the RNA polymerase beta chain family. As to quaternary structure, the RNAP catalytic core consists of 2 alpha, 1 beta, 1 beta' and 1 omega subunit. When a sigma factor is associated with the core the holoenzyme is formed, which can initiate transcription.

The catalysed reaction is RNA(n) + a ribonucleoside 5'-triphosphate = RNA(n+1) + diphosphate. In terms of biological role, DNA-dependent RNA polymerase catalyzes the transcription of DNA into RNA using the four ribonucleoside triphosphates as substrates. The sequence is that of DNA-directed RNA polymerase subunit beta from Acidiphilium cryptum (strain JF-5).